We begin with the raw amino-acid sequence, 449 residues long: Bifunctional protein GlmU (449 aa).

The interval 1 to 226 (MVIVAVLAAG…YEEILGVNDR (226 aa)) is pyrophosphorylase. UDP-N-acetyl-alpha-D-glucosamine-binding positions include 7 to 10 (LAAG), Lys-21, Gln-73, and 78 to 79 (GT). Asp-103 lines the Mg(2+) pocket. UDP-N-acetyl-alpha-D-glucosamine is bound by residues Gly-140, Glu-155, Asn-170, and Asn-224. A Mg(2+)-binding site is contributed by Asn-224. Positions 227–247 (VQLAAAYQVLQNRIKKAWMQA) are linker. Positions 248-449 (GVTLIDPASI…VVKPNWEPEA (202 aa)) are N-acetyltransferase. UDP-N-acetyl-alpha-D-glucosamine contacts are provided by Arg-329 and Lys-347. His-359 functions as the Proton acceptor in the catalytic mechanism. Residues Tyr-362 and Asn-373 each contribute to the UDP-N-acetyl-alpha-D-glucosamine site. Acetyl-CoA-binding positions include Ala-376, 382–383 (NY), Ala-419, and Arg-436.

This sequence in the N-terminal section; belongs to the N-acetylglucosamine-1-phosphate uridyltransferase family. The protein in the C-terminal section; belongs to the transferase hexapeptide repeat family. In terms of assembly, homotrimer. The cofactor is Mg(2+).

Its subcellular location is the cytoplasm. It carries out the reaction alpha-D-glucosamine 1-phosphate + acetyl-CoA = N-acetyl-alpha-D-glucosamine 1-phosphate + CoA + H(+). The enzyme catalyses N-acetyl-alpha-D-glucosamine 1-phosphate + UTP + H(+) = UDP-N-acetyl-alpha-D-glucosamine + diphosphate. The protein operates within nucleotide-sugar biosynthesis; UDP-N-acetyl-alpha-D-glucosamine biosynthesis; N-acetyl-alpha-D-glucosamine 1-phosphate from alpha-D-glucosamine 6-phosphate (route II): step 2/2. Its pathway is nucleotide-sugar biosynthesis; UDP-N-acetyl-alpha-D-glucosamine biosynthesis; UDP-N-acetyl-alpha-D-glucosamine from N-acetyl-alpha-D-glucosamine 1-phosphate: step 1/1. It functions in the pathway bacterial outer membrane biogenesis; LPS lipid A biosynthesis. Its function is as follows. Catalyzes the last two sequential reactions in the de novo biosynthetic pathway for UDP-N-acetylglucosamine (UDP-GlcNAc). The C-terminal domain catalyzes the transfer of acetyl group from acetyl coenzyme A to glucosamine-1-phosphate (GlcN-1-P) to produce N-acetylglucosamine-1-phosphate (GlcNAc-1-P), which is converted into UDP-GlcNAc by the transfer of uridine 5-monophosphate (from uridine 5-triphosphate), a reaction catalyzed by the N-terminal domain. The polypeptide is Bifunctional protein GlmU (Thermosynechococcus vestitus (strain NIES-2133 / IAM M-273 / BP-1)).